We begin with the raw amino-acid sequence, 184 residues long: Fungal defensin copsin (184 aa).

The first 23 residues, 1 to 23, serve as a signal peptide directing secretion; the sequence is MKLSTSLLAIVAVASTFIGNALS. Positions 24–127 are excised as a propeptide; it reads ATTVPGCFAE…LGRVLPVEKR (104 aa). A Pyrrolidone carboxylic acid modification is found at Gln-128. 6 cysteine pairs are disulfide-bonded: Cys-130-Cys-159, Cys-137-Cys-167, Cys-145-Cys-175, Cys-149-Cys-177, Cys-152-Cys-184, and Cys-162-Cys-181.

This sequence belongs to the invertebrate defensin family. Contains a unique connectivity of 6 cysteine bonds in contrast to most other CS-alpha-beta defensins which are linked by 3 or 4 disulfide bonds. In terms of processing, disulfide bonds are essential for structural integrity and antibacterial activity, since activity is lost after treatment with reducing agents. Thanks to disulfide bonds and N-terminal pyroglutamate, the protein is extremely stable in a wide pH and temperature range and insensitive toward proteases.

It localises to the secreted. The protein localises to the target cell membrane. Antimicrobial peptide that acts against Gram-positive bacteria (Listeria spp., Enterococcus spp., B.subtilis, B.anthracis, P.aeruginosa). Is not active against Gram-negative bacteria. It selectively inhibits peptidoglycan biosynthesis through complex formation with the cell wall precursor lipid II (1:1 molar ratio), probably anchoring lipid II to the membrane, thus inhibiting cell wall synthesis. The interaction with lipid II involves the third position of the pentapeptide. Shows bactericidal activity at about 2-fold minimal inhibitory concentrations (MIC), but does not form pore across the membrane. This chain is Fungal defensin copsin, found in Coprinopsis cinerea (Inky cap fungus).